The chain runs to 625 residues: Probable potassium transport system protein Kup 2 (625 aa).

12 helical membrane-spanning segments follow: residues 15–35, 52–72, 98–118, 134–154, 164–184, 212–232, 246–266, 284–304, 336–356, 365–385, 394–414, and 417–437; these read LSFA…LYAF, ILSL…LVIV, GGWL…DGML, LSPN…FFLF, IGVY…ILGF, FALF…ALFA, WFAV…AFVL, FLPV…QAII, VYLP…VVIF, AYGI…GIIA, FKIL…AGNI, and LLTG…VMYT.

Belongs to the HAK/KUP transporter (TC 2.A.72) family.

The protein resides in the cell inner membrane. It catalyses the reaction K(+)(in) + H(+)(in) = K(+)(out) + H(+)(out). Its function is as follows. Transport of potassium into the cell. Likely operates as a K(+):H(+) symporter. This is Probable potassium transport system protein Kup 2 from Legionella pneumophila (strain Paris).